A 158-amino-acid polypeptide reads, in one-letter code: NAD(P)H-quinone oxidoreductase subunit J, chloroplastic (158 aa).

The protein belongs to the complex I 30 kDa subunit family. As to quaternary structure, NDH is composed of at least 16 different subunits, 5 of which are encoded in the nucleus.

Its subcellular location is the plastid. It is found in the chloroplast thylakoid membrane. The enzyme catalyses a plastoquinone + NADH + (n+1) H(+)(in) = a plastoquinol + NAD(+) + n H(+)(out). It catalyses the reaction a plastoquinone + NADPH + (n+1) H(+)(in) = a plastoquinol + NADP(+) + n H(+)(out). In terms of biological role, NDH shuttles electrons from NAD(P)H:plastoquinone, via FMN and iron-sulfur (Fe-S) centers, to quinones in the photosynthetic chain and possibly in a chloroplast respiratory chain. The immediate electron acceptor for the enzyme in this species is believed to be plastoquinone. Couples the redox reaction to proton translocation, and thus conserves the redox energy in a proton gradient. The protein is NAD(P)H-quinone oxidoreductase subunit J, chloroplastic of Solanum tuberosum (Potato).